Here is a 176-residue protein sequence, read N- to C-terminus: NAD(P)H-quinone oxidoreductase subunit I, chloroplastic (176 aa).

4Fe-4S ferredoxin-type domains are found at residues 55-84 (GRIH…VNWE) and 95-124 (QTYS…MTEE). Cysteine 64, cysteine 67, cysteine 70, cysteine 74, cysteine 104, cysteine 107, cysteine 110, and cysteine 114 together coordinate [4Fe-4S] cluster.

The protein belongs to the complex I 23 kDa subunit family. As to quaternary structure, NDH is composed of at least 16 different subunits, 5 of which are encoded in the nucleus. The cofactor is [4Fe-4S] cluster.

The protein resides in the plastid. It is found in the chloroplast thylakoid membrane. It carries out the reaction a plastoquinone + NADH + (n+1) H(+)(in) = a plastoquinol + NAD(+) + n H(+)(out). The enzyme catalyses a plastoquinone + NADPH + (n+1) H(+)(in) = a plastoquinol + NADP(+) + n H(+)(out). Functionally, NDH shuttles electrons from NAD(P)H:plastoquinone, via FMN and iron-sulfur (Fe-S) centers, to quinones in the photosynthetic chain and possibly in a chloroplast respiratory chain. The immediate electron acceptor for the enzyme in this species is believed to be plastoquinone. Couples the redox reaction to proton translocation, and thus conserves the redox energy in a proton gradient. This chain is NAD(P)H-quinone oxidoreductase subunit I, chloroplastic, found in Mesostigma viride (Green alga).